The primary structure comprises 275 residues: F420-dependent methylenetetrahydromethanopterin dehydrogenase (275 aa).

The protein belongs to the MTD family.

The catalysed reaction is 5,10-methylenetetrahydromethanopterin + oxidized coenzyme F420-(gamma-L-Glu)(n) + 2 H(+) = 5,10-methenyl-5,6,7,8-tetrahydromethanopterin + reduced coenzyme F420-(gamma-L-Glu)(n). The protein operates within one-carbon metabolism; methanogenesis from CO(2); 5,10-methylene-5,6,7,8-tetrahydromethanopterin from 5,10-methenyl-5,6,7,8-tetrahydromethanopterin (coenzyme F420 route): step 1/1. Its function is as follows. Catalyzes the reversible reduction of methenyl-H(4)MPT(+) to methylene-H(4)MPT. This Methanobrevibacter smithii (strain ATCC 35061 / DSM 861 / OCM 144 / PS) protein is F420-dependent methylenetetrahydromethanopterin dehydrogenase.